Reading from the N-terminus, the 194-residue chain is MQLFIEYFPLLIFFIINSIAGIYWATGSLIVAAFVQIFYYKIKKEKIPAKQWIIFGLIVVFGGLTIYLQNDAFLKWKVTIINAFFAAALLVSNTFFNKNIIKEFLAESLSLPENIWSRLNLAWALFFLFCSGLNYYIAFNYDLDTWVNFKVFGLTGLMFLFSITSILFLYKYLEVEEEINDTDTINNEKTKEST.

5 consecutive transmembrane segments (helical) span residues 3–23, 47–67, 76–96, 119–139, and 149–169; these read LFIEYFPLLIFFIINSIAGIY, IPAKQWIIFGLIVVFGGLTIY, WKVTIINAFFAAALLVSNTFF, LNLAWALFFLFCSGLNYYIAF, and FKVFGLTGLMFLFSITSILFL.

The protein belongs to the YciB family.

Its subcellular location is the cell inner membrane. Functionally, plays a role in cell envelope biogenesis, maintenance of cell envelope integrity and membrane homeostasis. This Colwellia psychrerythraea (strain 34H / ATCC BAA-681) (Vibrio psychroerythus) protein is Inner membrane-spanning protein YciB.